The primary structure comprises 203 residues: Holliday junction branch migration complex subunit RuvA (203 aa).

Residues 1–64 form a domain I region; sequence MIGRLRGYIL…EDAQLLYGFN (64 aa). Positions 65-142 are domain II; that stretch reads DKQERALFRE…KGLNGDLFNN (78 aa). The tract at residues 143–154 is flexible linker; the sequence is SSEITLPTAAQA. A domain III region spans residues 155 to 203; sequence AELDAEAEAASALVALGYKPQEASRMVSKIAKPGADCETLIRDALRAAL.

It belongs to the RuvA family. In terms of assembly, homotetramer. Forms an RuvA(8)-RuvB(12)-Holliday junction (HJ) complex. HJ DNA is sandwiched between 2 RuvA tetramers; dsDNA enters through RuvA and exits via RuvB. An RuvB hexamer assembles on each DNA strand where it exits the tetramer. Each RuvB hexamer is contacted by two RuvA subunits (via domain III) on 2 adjacent RuvB subunits; this complex drives branch migration. In the full resolvosome a probable DNA-RuvA(4)-RuvB(12)-RuvC(2) complex forms which resolves the HJ.

The protein localises to the cytoplasm. Its function is as follows. The RuvA-RuvB-RuvC complex processes Holliday junction (HJ) DNA during genetic recombination and DNA repair, while the RuvA-RuvB complex plays an important role in the rescue of blocked DNA replication forks via replication fork reversal (RFR). RuvA specifically binds to HJ cruciform DNA, conferring on it an open structure. The RuvB hexamer acts as an ATP-dependent pump, pulling dsDNA into and through the RuvAB complex. HJ branch migration allows RuvC to scan DNA until it finds its consensus sequence, where it cleaves and resolves the cruciform DNA. The polypeptide is Holliday junction branch migration complex subunit RuvA (Serratia proteamaculans (strain 568)).